Reading from the N-terminus, the 562-residue chain is Potassium-transporting ATPase potassium-binding subunit (562 aa).

12 consecutive transmembrane segments (helical) span residues 6 to 26 (FLLI…LGSF), 62 to 82 (YALA…ALLM), 132 to 152 (GLAV…FALI), 170 to 190 (VFRI…LFFV), 253 to 273 (FVQM…FGQV), 283 to 303 (LIWA…YAEL), 327 to 347 (FGIL…CGAV), 356 to 376 (ALGG…FGGV), 379 to 399 (GLYG…LMIG), 416 to 436 (MTAL…ALAI), 483 to 503 (LLLA…VLAI), and 526 to 546 (LFIG…FVPA).

The protein belongs to the KdpA family. As to quaternary structure, the system is composed of three essential subunits: KdpA, KdpB and KdpC.

The protein localises to the cell inner membrane. Part of the high-affinity ATP-driven potassium transport (or Kdp) system, which catalyzes the hydrolysis of ATP coupled with the electrogenic transport of potassium into the cytoplasm. This subunit binds the periplasmic potassium ions and delivers the ions to the membrane domain of KdpB through an intramembrane tunnel. The protein is Potassium-transporting ATPase potassium-binding subunit of Serratia proteamaculans (strain 568).